Here is a 235-residue protein sequence, read N- to C-terminus: Phosphoribosylaminoimidazole-succinocarboxamide synthase (235 aa).

This sequence belongs to the SAICAR synthetase family.

The catalysed reaction is 5-amino-1-(5-phospho-D-ribosyl)imidazole-4-carboxylate + L-aspartate + ATP = (2S)-2-[5-amino-1-(5-phospho-beta-D-ribosyl)imidazole-4-carboxamido]succinate + ADP + phosphate + 2 H(+). Its pathway is purine metabolism; IMP biosynthesis via de novo pathway; 5-amino-1-(5-phospho-D-ribosyl)imidazole-4-carboxamide from 5-amino-1-(5-phospho-D-ribosyl)imidazole-4-carboxylate: step 1/2. The sequence is that of Phosphoribosylaminoimidazole-succinocarboxamide synthase from Streptococcus pneumoniae (strain JJA).